The sequence spans 265 residues: tRNA (guanine-N(7)-)-methyltransferase (265 aa).

The S-adenosyl-L-methionine site is built by Glu96, Glu121, Asp148, and Asp170. The active site involves Asp170. Positions 174 and 206 each coordinate substrate.

This sequence belongs to the class I-like SAM-binding methyltransferase superfamily. TrmB family.

It carries out the reaction guanosine(46) in tRNA + S-adenosyl-L-methionine = N(7)-methylguanosine(46) in tRNA + S-adenosyl-L-homocysteine. It participates in tRNA modification; N(7)-methylguanine-tRNA biosynthesis. In terms of biological role, catalyzes the formation of N(7)-methylguanine at position 46 (m7G46) in tRNA. The protein is tRNA (guanine-N(7)-)-methyltransferase of Rhodopseudomonas palustris (strain ATCC BAA-98 / CGA009).